A 458-amino-acid polypeptide reads, in one-letter code: Serine protease HTRA2, mitochondrial (458 aa).

A mitochondrion-targeting transit peptide spans 1–31 (MAALRAGRGAGWSLRGWRALWGGRWGKGPLL). Residues 32 to 133 (TPDLRALLTS…GGRGPPAVLA (102 aa)) constitute a propeptide that is removed on maturation. A helical membrane pass occupies residues 105–125 (VWLAVALGAGGAVLLLFWGGG). The short motif at 134 to 137 (SVLG) is the IAP-binding motif element. Residues 166–342 (ILGRHPFSGR…IPSDRLREFL (177 aa)) are serine protease. Catalysis depends on charge relay system residues His-198, Asp-228, and Ser-306. In terms of domain architecture, PDZ spans 364 to 445 (VMMLTLTPSI…QLAVRIRRGQ (82 aa)).

The protein belongs to the peptidase S1C family. As to quaternary structure, homotrimer. Interacts with MXI2. Interacts with THAP5 under apoptotic conditions. The mature protein, but not the precursor, binds to BIRC2/c-IAP1, BIRC3/c-IAP2 and XIAP/BIRC4. Interacts with BIRC6/bruce. Interacts with AREL1 (via HECT domain); in the cytoplasm following induction of apoptosis. Ubiquitinated by BIRC6; this activity is inhibited by DIABLO/SMAC. Post-translationally, autoproteolytically activated.

The protein resides in the mitochondrion intermembrane space. It is found in the mitochondrion membrane. The catalysed reaction is Cleavage of non-polar aliphatic amino-acids at the P1 position, with a preference for Val, Ile and Met. At the P2 and P3 positions, Arg is selected most strongly with a secondary preference for other hydrophilic residues.. With respect to regulation, inhibited by BIRC6. Functionally, serine protease that shows proteolytic activity against a non-specific substrate beta-casein. Promotes apoptosis by either relieving the inhibition of BIRC proteins on caspases, leading to an increase in caspase activity; or by a BIRC inhibition-independent, caspase-independent and serine protease activity-dependent mechanism. Cleaves BIRC6 and relieves its inhibition on CASP3, CASP7 and CASP9, but it is also prone to inhibition by BIRC6. Cleaves THAP5 and promotes its degradation during apoptosis. This is Serine protease HTRA2, mitochondrial (HTRA2) from Bos taurus (Bovine).